Reading from the N-terminus, the 98-residue chain is Growth-regulated protein homolog gamma (98 aa).

The N-terminal stretch at 1–29 (MAPAASSAPRLLRAAMLLLLLVAAGRRAA) is a signal peptide. 2 disulfides stabilise this stretch: Cys-39–Cys-65 and Cys-41–Cys-81.

This sequence belongs to the intercrine alpha (chemokine CxC) family.

It is found in the secreted. The protein is Growth-regulated protein homolog gamma of Bos taurus (Bovine).